Here is a 401-residue protein sequence, read N- to C-terminus: Pleckstrin homology-like domain family A member 1 (401 aa).

Disordered regions lie at residues 39 to 67 (IQKRREGARPVPFSERSQEDGRGPAARSS), 190 to 222 (QQQQQQQQQQQQQQQPGQGPAEPSQPSGPAVAS), and 293 to 401 (KSTR…SNSA). The 133-residue stretch at 151 to 283 (LKEGVLEKRS…AEITLQMVQY (133 aa)) folds into the PH domain. Residues 190–204 (QQQQQQQQQQQQQQQ) are compositionally biased toward low complexity. Residues 308-344 (PSQPQPQPQLQPQPQPQPQPQPQPQSQPQPQPQPKPQ) are compositionally biased toward pro residues. Residues 311–346 (PQPQPQLQPQPQPQPQPQPQPQSQPQPQPQPKPQPQ) are 15 X 2 AA repeats of P-Q. The segment covering 352 to 378 (PHPHPHPHSHPHSHPHPHPHPHPHQIP) has biased composition (basic residues). A 14 X 2 AA repeats of P-H region spans residues 352 to 389 (PHPHPHPHSHPHSHPHPHPHPHPHQIPHPHPQPHSQPH).

As to quaternary structure, interacts with RPL14, EIF3S7 and PABPC4. In terms of tissue distribution, widely expressed with highest levels in pancreas. Strongly expressed by benign melanocytic nevi, and progressively reduced expressed in primary and metastatic melanomas (at protein level).

The protein localises to the cytoplasm. The protein resides in the cytoplasmic vesicle. It is found in the nucleus. It localises to the nucleolus. Its function is as follows. Seems to be involved in regulation of apoptosis. May be involved in detachment-mediated programmed cell death. May mediate apoptosis during neuronal development. May be involved in regulation of anti-apoptotic effects of IGF1. May be involved in translational regulation. The sequence is that of Pleckstrin homology-like domain family A member 1 (PHLDA1) from Homo sapiens (Human).